The chain runs to 175 residues: Epididymal-specific lipocalin-8 (175 aa).

Positions 1–25 (MPGAAEALPTVTVTLVAGAVPPASG) are cleaved as a signal peptide. Asn66 and Asn74 each carry an N-linked (GlcNAc...) asparagine glycan. Cysteines 79 and 166 form a disulfide.

This sequence belongs to the calycin superfamily. Lipocalin family.

The protein resides in the secreted. Functionally, may play a role in male fertility. May act as a retinoid carrier protein within the epididymis. The protein is Epididymal-specific lipocalin-8 (LCN8) of Homo sapiens (Human).